The chain runs to 245 residues: Probable transcriptional regulatory protein Ddes_0536 (245 aa).

Residues 1-21 form a disordered region; the sequence is MAGHSKWANIQHRKGRQDAKR.

The protein belongs to the TACO1 family.

The protein resides in the cytoplasm. The chain is Probable transcriptional regulatory protein Ddes_0536 from Desulfovibrio desulfuricans (strain ATCC 27774 / DSM 6949 / MB).